The primary structure comprises 174 residues: RNA pyrophosphohydrolase (174 aa).

In terms of domain architecture, Nudix hydrolase spans 6 to 149 (GFRANVGIII…KRDVYRKVMK (144 aa)). The short motif at 38 to 59 (GGVDDGETAEEAMYRELYEEVG) is the Nudix box element.

Belongs to the Nudix hydrolase family. RppH subfamily. A divalent metal cation is required as a cofactor.

In terms of biological role, accelerates the degradation of transcripts by removing pyrophosphate from the 5'-end of triphosphorylated RNA, leading to a more labile monophosphorylated state that can stimulate subsequent ribonuclease cleavage. The polypeptide is RNA pyrophosphohydrolase (Shewanella sp. (strain MR-7)).